The sequence spans 122 residues: Large ribosomal subunit protein uL14 (122 aa).

This sequence belongs to the universal ribosomal protein uL14 family. As to quaternary structure, part of the 50S ribosomal subunit. Forms a cluster with proteins L3 and L19. In the 70S ribosome, L14 and L19 interact and together make contacts with the 16S rRNA in bridges B5 and B8.

Its function is as follows. Binds to 23S rRNA. Forms part of two intersubunit bridges in the 70S ribosome. This is Large ribosomal subunit protein uL14 from Mycolicibacterium smegmatis (strain ATCC 700084 / mc(2)155) (Mycobacterium smegmatis).